Consider the following 161-residue polypeptide: Phosphotransferase enzyme IIB component GlvB (161 aa).

A helical membrane pass occupies residues 10-32; the sequence is LTQIAIGLCFTLLYFVVFRTLIL. The PTS EIIB type-1 domain maps to 70–152; the sequence is LDQAAGILQA…DSLINSHQSA (83 aa). Cys-92 functions as the Phosphocysteine intermediate in the catalytic mechanism.

It is found in the cell inner membrane. The phosphoenolpyruvate-dependent sugar phosphotransferase system (sugar PTS), a major carbohydrate active -transport system, catalyzes the phosphorylation of incoming sugar substrates concomitantly with their translocation across the cell membrane. This operon may be cryptic in wild-type K12 strains. The protein is Phosphotransferase enzyme IIB component GlvB of Escherichia coli (strain K12).